The sequence spans 662 residues: MEKQDRIKYLVDILNKYAYHYYTLDDPLIADSEYDVLYDELVNLEKETGIVLPNSPTNRIGGEVLSGFEKHEHLNTLYSLGKAQSKEEVRNWVDKTIEFVQNYNENHVNKLPKVEFYVEFKFDGLTVNLTYDGGYLVMATTRGNGTIGEVITSQVKTINSIPLKIKDTRLMEIQGEGVMPLSSLENYNKTHEPKLKNARNAAAGALRNLDPAVTRERNLDAYFYNVNYLQDNELETQEEMIKFLGDNYFKLYPYEKHATSFEEVSKFIDEIFELRNEIDVLTDGVVIKVNDFKTREKLGYTNKFPRWAIAYKFEPERFTTIVKEVEWNVGRTGKVTPTALLEPVEIGNVTVKRATLNNIDDIERKQVRLNSEVFVRRSNDVIPEIMGVVNPDQEDTEEIEIPHYCPYCHSELFRDGVHIFCPNSMSCTPQLVKRMVHFASRNAMNIDGLSEKTLEVLLEKLNIKSIEEIYDVKKEQLMQLDGFKEKKSQNLINAIEKSKNVDLANFIFALGIPEIGEKTSFELAQKYKSFDNLREAKFEELIQIEDIGNVIAEEIVEFFHDETISNSIDSLLSKGIKIKNPENIEKKLDNLTFVLTGSLVNYSRKELTDKLSNLGAKVSSSVSKNTDYVVYGEKAGSKLTKAKDLGVKLMTEDELNSFLDNL.

NAD(+) contacts are provided by residues 31–35 (DSEYD), 79–80 (SL), and Glu119. The active-site N6-AMP-lysine intermediate is Lys121. Residues Arg142, Glu176, Lys288, and Lys312 each coordinate NAD(+). The Zn(2+) site is built by Cys405, Cys408, Cys421, and Cys427. The BRCT domain maps to 583–662 (NIEKKLDNLT…DELNSFLDNL (80 aa)).

Belongs to the NAD-dependent DNA ligase family. LigA subfamily. Mg(2+) serves as cofactor. Mn(2+) is required as a cofactor.

It carries out the reaction NAD(+) + (deoxyribonucleotide)n-3'-hydroxyl + 5'-phospho-(deoxyribonucleotide)m = (deoxyribonucleotide)n+m + AMP + beta-nicotinamide D-nucleotide.. In terms of biological role, DNA ligase that catalyzes the formation of phosphodiester linkages between 5'-phosphoryl and 3'-hydroxyl groups in double-stranded DNA using NAD as a coenzyme and as the energy source for the reaction. It is essential for DNA replication and repair of damaged DNA. This is DNA ligase from Finegoldia magna (strain ATCC 29328 / DSM 20472 / WAL 2508) (Peptostreptococcus magnus).